A 125-amino-acid chain; its full sequence is Holo-[acyl-carrier-protein] synthase (125 aa).

Positions 8 and 57 each coordinate Mg(2+).

The protein belongs to the P-Pant transferase superfamily. AcpS family. Mg(2+) serves as cofactor.

The protein resides in the cytoplasm. It carries out the reaction apo-[ACP] + CoA = holo-[ACP] + adenosine 3',5'-bisphosphate + H(+). In terms of biological role, transfers the 4'-phosphopantetheine moiety from coenzyme A to a Ser of acyl-carrier-protein. The protein is Holo-[acyl-carrier-protein] synthase of Azoarcus sp. (strain BH72).